The chain runs to 839 residues: LPS-assembly protein LptD (839 aa).

The N-terminal stretch at 1–21 (MAIGITACVLSLINYQGLAYS) is a signal peptide.

Belongs to the LptD family. As to quaternary structure, component of the lipopolysaccharide transport and assembly complex. Interacts with LptE and LptA.

It localises to the cell outer membrane. Functionally, together with LptE, is involved in the assembly of lipopolysaccharide (LPS) at the surface of the outer membrane. The chain is LPS-assembly protein LptD from Legionella pneumophila (strain Lens).